Here is a 417-residue protein sequence, read N- to C-terminus: UPF0754 membrane protein PCC8801_0398 (417 aa).

The next 2 helical transmembrane spans lie at 11 to 31 (FSLLWTIALPPIAGTIIGYFT) and 395 to 415 (IVNIGGVLGFLVGVFQSILLI).

This sequence belongs to the UPF0754 family.

It localises to the cell inner membrane. In Rippkaea orientalis (strain PCC 8801 / RF-1) (Cyanothece sp. (strain PCC 8801)), this protein is UPF0754 membrane protein PCC8801_0398.